The primary structure comprises 725 residues: Gamma-tubulin complex component 5 (725 aa).

The tract at residues 222-246 (TENEEKMSDNASASSGSDQGPSSRQ) is disordered. Positions 232–244 (ASASSGSDQGPSS) are enriched in low complexity.

It belongs to the TUBGCP family. In terms of assembly, component of the gamma-tubulin ring complex (gTuRC) consisting of TUBGCP2, TUBGCP3, TUBGCP4, TUBGCP5 and TUBGCP6 and gamma-tubulin TUBG1 or TUBG2. TUBGCP2, TUBGCP3, TUBGCP4, TUBGCP5 and TUBGCP6 assemble in a 5:5:2:1:1 stoichiometry; each is associated with a gamma-tubulin, thereby arranging 14 gamma-tubulins in a helical manner. Gamma-tubulin at the first position is blocked by TUBGCP3 at the last position, allowing 13 protafilaments to grow into a microtubule. The gTuRC (via TUBGCP3 and TUBGCP6) interacts with ACTB and MZT1; the interactions form a luminal bridge that stabilizes the initial structure during complex assembly. The gTuRC (via TUBGCP2) interacts with MZT2A/MZT2B and CDK5RAP2 (via CM1 motif); the interactions play a role in gTuRC activation.

Its subcellular location is the cytoplasm. It is found in the cytoskeleton. It localises to the microtubule organizing center. The protein resides in the centrosome. Component of the gamma-tubulin ring complex (gTuRC) which mediates microtubule nucleation. The gTuRC regulates the minus-end nucleation of alpha-beta tubulin heterodimers that grow into microtubule protafilaments, a critical step in centrosome duplication and spindle formation. The protein is Gamma-tubulin complex component 5 (TUBGCP5) of Macaca fascicularis (Crab-eating macaque).